Reading from the N-terminus, the 412-residue chain is Diphosphomevalonate decarboxylase MVD1, peroxisomal (412 aa).

Tyr23–Lys26 contributes to the (R)-5-diphosphomevalonate binding site. Residues Ser40–Leu48 carry the Peroxisomal targeting signal PTS2 motif. (R)-5-diphosphomevalonate contacts are provided by residues Arg78, Ser161–Arg166, and Thr217.

This sequence belongs to the diphosphomevalonate decarboxylase family. In terms of assembly, homodimer.

The protein localises to the peroxisome. The enzyme catalyses (R)-5-diphosphomevalonate + ATP = isopentenyl diphosphate + ADP + phosphate + CO2. It functions in the pathway isoprenoid biosynthesis; isopentenyl diphosphate biosynthesis via mevalonate pathway; isopentenyl diphosphate from (R)-mevalonate: step 3/3. Its function is as follows. Performs the first committed step in the biosynthesis of isoprene-containing compounds such as sterols and terpenoids. Is specific for (R)-5-diphosphomevalonate (MVAPP). The catalytic efficiency with (R)-5-phosphomevalonate (MVAP) as substrate is 10000-fold lower than for MVAPP. Can complement a yeast mutant defective in MVD activity. The sequence is that of Diphosphomevalonate decarboxylase MVD1, peroxisomal from Arabidopsis thaliana (Mouse-ear cress).